A 776-amino-acid polypeptide reads, in one-letter code: Isoamylase (776 aa).

Residues 1-26 form the signal peptide; sequence MKCPKILAALLGCAVLAGVPAMPAHA. Ca(2+) is bound by residues aspartate 154, glutamate 255, threonine 256, asparagine 258, and aspartate 285. The active-site Nucleophile is aspartate 401. An intrachain disulfide couples cysteine 410 to cysteine 422. The Proton donor role is filled by glutamate 461. 2 disulfide bridges follow: cysteine 546–cysteine 616 and cysteine 738–cysteine 766.

Belongs to the glycosyl hydrolase 13 family. In terms of assembly, monomer. It depends on Ca(2+) as a cofactor.

It localises to the secreted. The enzyme catalyses Hydrolysis of (1-&gt;6)-alpha-D-glucosidic branch linkages in glycogen, amylopectin and their beta-limit dextrins.. This chain is Isoamylase (iam), found in Pseudomonas amyloderamosa.